A 92-amino-acid chain; its full sequence is Small ribosomal subunit protein uS19 (92 aa).

Belongs to the universal ribosomal protein uS19 family.

Protein S19 forms a complex with S13 that binds strongly to the 16S ribosomal RNA. The sequence is that of Small ribosomal subunit protein uS19 from Tolumonas auensis (strain DSM 9187 / NBRC 110442 / TA 4).